We begin with the raw amino-acid sequence, 162 residues long: Ribonuclease P protein component (162 aa).

The disordered stretch occupies residues 1 to 67 (MDEKDLAAQP…GGKLVSLKGD (67 aa)). The span at 21 to 31 (GPHEDPRRQEG) shows a compositional bias: basic and acidic residues.

This sequence belongs to the RnpA family. In terms of assembly, consists of a catalytic RNA component (M1 or rnpB) and a protein subunit.

The enzyme catalyses Endonucleolytic cleavage of RNA, removing 5'-extranucleotides from tRNA precursor.. In terms of biological role, RNaseP catalyzes the removal of the 5'-leader sequence from pre-tRNA to produce the mature 5'-terminus. It can also cleave other RNA substrates such as 4.5S RNA. The protein component plays an auxiliary but essential role in vivo by binding to the 5'-leader sequence and broadening the substrate specificity of the ribozyme. The protein is Ribonuclease P protein component of Thermus brockianus.